A 312-amino-acid polypeptide reads, in one-letter code: MEPGSVENLSIVYRSRDFLVVNKHWDVRIDSKAWRETLTLQKQLRYRFPELADPDTCYGFRFCHQLDFSTSGALCVALNKAAAGSAYRCFKERRVTKAYLALLRGHIQESRVTISHAIGRNSTEGRAHTMCIEGSQGCENPKPSLTDLVVLEHGLYAGDPVSKVLLKPLTGRTHQLRVHCSALGHPVVGDLTYGEVSGREDRPFRMMLHAFYLRIPTDTECVEVCTPDPFLPSLDACWSPHTLLQSLDQLVQALRATPDPDPEDRGPRPGSPSALLPGPGRPPPPPTKPPETEAQRGPCLQWLSEWTLEPDS.

M1 carries the N-acetylmethionine modification. D67 is an active-site residue. The interval 256 to 298 is disordered; sequence ATPDPDPEDRGPRPGSPSALLPGPGRPPPPPTKPPETEAQRGP. Pro residues predominate over residues 279–289; it reads PGRPPPPPTKP.

The protein belongs to the pseudouridine synthase RluA family.

This is RNA pseudouridylate synthase domain-containing protein 1 (RPUSD1) from Homo sapiens (Human).